The following is a 220-amino-acid chain: Pyrrolidone-carboxylate peptidase (220 aa).

Residues Glu-80, Cys-143, and His-167 contribute to the active site.

It belongs to the peptidase C15 family. Homotetramer.

The protein resides in the cytoplasm. The catalysed reaction is Release of an N-terminal pyroglutamyl group from a polypeptide, the second amino acid generally not being Pro.. Removes 5-oxoproline from various penultimate amino acid residues except L-proline. The chain is Pyrrolidone-carboxylate peptidase (pcp) from Thermococcus litoralis (strain ATCC 51850 / DSM 5473 / JCM 8560 / NS-C).